We begin with the raw amino-acid sequence, 877 residues long: Leucine--tRNA ligase (877 aa).

The 'HIGH' region signature appears at 43–53 (PYPSGRIHMGH). Residues 628 to 632 (KMSKS) carry the 'KMSKS' region motif. Residue Lys631 participates in ATP binding.

It belongs to the class-I aminoacyl-tRNA synthetase family.

Its subcellular location is the cytoplasm. It catalyses the reaction tRNA(Leu) + L-leucine + ATP = L-leucyl-tRNA(Leu) + AMP + diphosphate. In Brucella suis biovar 1 (strain 1330), this protein is Leucine--tRNA ligase.